The primary structure comprises 338 residues: Glycerol-3-phosphate dehydrogenase [NAD(P)+] (338 aa).

4 residues coordinate NADPH: S14, Y15, H35, and K109. 3 residues coordinate sn-glycerol 3-phosphate: K109, G138, and T140. A142 is a binding site for NADPH. Residues K194, D247, S257, R258, and N259 each contribute to the sn-glycerol 3-phosphate site. The Proton acceptor role is filled by K194. An NADPH-binding site is contributed by R258. NADPH contacts are provided by V282 and E284.

The protein belongs to the NAD-dependent glycerol-3-phosphate dehydrogenase family.

It localises to the cytoplasm. The catalysed reaction is sn-glycerol 3-phosphate + NAD(+) = dihydroxyacetone phosphate + NADH + H(+). It carries out the reaction sn-glycerol 3-phosphate + NADP(+) = dihydroxyacetone phosphate + NADPH + H(+). The protein operates within membrane lipid metabolism; glycerophospholipid metabolism. Catalyzes the reduction of the glycolytic intermediate dihydroxyacetone phosphate (DHAP) to sn-glycerol 3-phosphate (G3P), the key precursor for phospholipid synthesis. This is Glycerol-3-phosphate dehydrogenase [NAD(P)+] from Shewanella baltica (strain OS155 / ATCC BAA-1091).